Reading from the N-terminus, the 429-residue chain is UDP-N-acetylglucosamine 1-carboxyvinyltransferase (429 aa).

Residue 22 to 23 (KN) coordinates phosphoenolpyruvate. Residue R102 coordinates UDP-N-acetyl-alpha-D-glucosamine. C126 acts as the Proton donor in catalysis. A 2-(S-cysteinyl)pyruvic acid O-phosphothioketal modification is found at C126. D316 and I338 together coordinate UDP-N-acetyl-alpha-D-glucosamine.

It belongs to the EPSP synthase family. MurA subfamily.

The protein localises to the cytoplasm. It catalyses the reaction phosphoenolpyruvate + UDP-N-acetyl-alpha-D-glucosamine = UDP-N-acetyl-3-O-(1-carboxyvinyl)-alpha-D-glucosamine + phosphate. The protein operates within cell wall biogenesis; peptidoglycan biosynthesis. Cell wall formation. Adds enolpyruvyl to UDP-N-acetylglucosamine. In Methylorubrum extorquens (strain PA1) (Methylobacterium extorquens), this protein is UDP-N-acetylglucosamine 1-carboxyvinyltransferase.